Consider the following 737-residue polypeptide: Disintegrin and metalloproteinase domain-containing protein 2 (737 aa).

A signal peptide spans 1-18; sequence MWLLLLLLSGLSRLGGLS. A propeptide spanning residues 19-180 is cleaved from the precursor; sequence EPQTEGTREK…YKIRSIKPQR (162 aa). Residues 19-688 lie on the Extracellular side of the membrane; the sequence is EPQTEGTREK…ASAYRSKSAR (670 aa). Residues Asn128 and Asn226 are each glycosylated (N-linked (GlcNAc...) asparagine). Positions 184–381 constitute a Peptidase M12B domain; the sequence is HYLEIHIVVE…QSSHCLQNQP (198 aa). Disulfide bonds link Cys293–Cys376, Cys335–Cys360, Cys337–Cys342, and Cys450–Cys470. N-linked (GlcNAc...) asparagine glycans are attached at residues Asn359, Asn464, Asn491, and Asn571. Residues 389-478 enclose the Disintegrin domain; sequence MAVCGNGELE…VCEEDFFVQD (90 aa). Residues 617 to 650 enclose the EGF-like domain; that stretch reads LNYDCTPEKCNHHGVCNNKKHCHCEPTYLPPDCK. 3 cysteine pairs are disulfide-bonded: Cys621–Cys632, Cys626–Cys638, and Cys640–Cys649. A helical membrane pass occupies residues 689–709; that stretch reads WPFFLIIPFYVVILVLIGMLV. At 710–737 the chain is on the cytoplasmic side; it reads KVYSQRKKWRMDDFSSEEQFESESESKD. Phosphoserine is present on Ser731.

As to quaternary structure, heterodimer with ADAM1/fertilin subunit alpha. The prodomain and the metalloprotease domain are cleaved during the epididymal maturation of the spermatozoa.

It localises to the membrane. Its function is as follows. Sperm surface membrane protein that may be involved in sperm-egg plasma membrane adhesion and fusion during fertilization. Could have a direct role in sperm-zona binding or migration of sperm from the uterus into the oviduct. Interactions with egg membrane could be mediated via binding between its disintegrin-like domain to one or more integrins receptors on the egg. This is a non catalytic metalloprotease-like protein. This is Disintegrin and metalloproteinase domain-containing protein 2 (Adam2) from Rattus norvegicus (Rat).